We begin with the raw amino-acid sequence, 269 residues long: Tryptophan synthase alpha chain (269 aa).

Catalysis depends on proton acceptor residues Glu-49 and Asp-60.

The protein belongs to the TrpA family. Tetramer of two alpha and two beta chains.

The catalysed reaction is (1S,2R)-1-C-(indol-3-yl)glycerol 3-phosphate + L-serine = D-glyceraldehyde 3-phosphate + L-tryptophan + H2O. Its pathway is amino-acid biosynthesis; L-tryptophan biosynthesis; L-tryptophan from chorismate: step 5/5. Functionally, the alpha subunit is responsible for the aldol cleavage of indoleglycerol phosphate to indole and glyceraldehyde 3-phosphate. The protein is Tryptophan synthase alpha chain of Actinobacillus pleuropneumoniae serotype 7 (strain AP76).